The sequence spans 486 residues: MRSGAERRGSSAAASPGSPPPGRARPAGSDAPSALPPPAAGQPRARDSGDVRSQPRPLFQWSKWKKRMGSSMSAATARRPVFDDKEDVNFDHFQILRAIGKGSFGKVCIVQKRDTEKMYAMKYMNKQQCIERDEVRNVFRELEILQEIEHVFLVNLWYSFQDEEDMFMVVDLLLGGDLRYHLQQNVQFSEDTVRLYICEMALALDYLRGQHIIHRDVKPDNILLDERGHAHLTDFNIATIIKDGERATALAGTKPYMAPEIFHSFVNGGTGYSFEVDWWSVGVMAYELLRGWRPYDIHSSNAVESLVQLFSTVSVQYVPTWSKEMVALLRKLLTVNPEHRLSSLQDVQAAPALAGVLWDHLSEKRVEPGFVPNKGRLHCDPTFELEEMILESRPLHKKKKRLAKNKSRDNSRDSSQSENDYLQDCLDAIQQDFVIFNREKLKRSQDLPREPLPAPESRDAAEPVEDEAERSALPMCGPICPSAGSG.

The disordered stretch occupies residues 1–56 (MRSGAERRGSSAAASPGSPPPGRARPAGSDAPSALPPPAAGQPRARDSGDVRSQPR). 3 positions are modified to phosphoserine: serine 10, serine 15, and serine 18. Residues 24-33 (ARPAGSDAPS) show a composition bias toward low complexity. The Protein kinase domain maps to 93–353 (FQILRAIGKG…LQDVQAAPAL (261 aa)). Residues 99–107 (IGKGSFGKV) and lysine 122 each bind ATP. Aspartate 216 functions as the Proton acceptor in the catalytic mechanism. The span at 396 to 405 (HKKKKRLAKN) shows a compositional bias: basic residues. Disordered stretches follow at residues 396–419 (HKKK…QSEN) and 444–486 (SQDL…AGSG).

It belongs to the protein kinase superfamily. Ser/Thr protein kinase family. It depends on Mg(2+) as a cofactor.

It catalyses the reaction L-seryl-[protein] + ATP = O-phospho-L-seryl-[protein] + ADP + H(+). It carries out the reaction L-threonyl-[protein] + ATP = O-phospho-L-threonyl-[protein] + ADP + H(+). The sequence is that of Serine/threonine-protein kinase 32C from Homo sapiens (Human).